Consider the following 359-residue polypeptide: UPF0283 membrane protein RHECIAT_CH0002430 (359 aa).

A disordered region spans residues 1-50 (MSKPPSDPPRRPPAAFAYEDEASEPRNSGRQQQGRRKPESFSENIVVTPD). 2 helical membrane-spanning segments follow: residues 77–97 (FGKIAAGAFGILLSLGLGLWT) and 111–131 (LGYAALGVLAIGILAVLALVI).

Belongs to the UPF0283 family.

The protein resides in the cell inner membrane. In Rhizobium etli (strain CIAT 652), this protein is UPF0283 membrane protein RHECIAT_CH0002430.